The chain runs to 284 residues: Polyamine aminopropyltransferase (284 aa).

Residues 2–237 (ELWYTEKHTE…GHWLFGFASK (236 aa)) form the PABS domain. Residue glutamine 31 participates in S-methyl-5'-thioadenosine binding. Residues histidine 62 and aspartate 86 each coordinate spermidine. Residues glutamate 106 and 137-138 (DG) contribute to the S-methyl-5'-thioadenosine site. Residue aspartate 155 is the Proton acceptor of the active site. 155–158 (DSTD) lines the spermidine pocket. Proline 162 is an S-methyl-5'-thioadenosine binding site.

Belongs to the spermidine/spermine synthase family. Homodimer or homotetramer.

It is found in the cytoplasm. It carries out the reaction S-adenosyl 3-(methylsulfanyl)propylamine + putrescine = S-methyl-5'-thioadenosine + spermidine + H(+). The protein operates within amine and polyamine biosynthesis; spermidine biosynthesis; spermidine from putrescine: step 1/1. Functionally, catalyzes the irreversible transfer of a propylamine group from the amino donor S-adenosylmethioninamine (decarboxy-AdoMet) to putrescine (1,4-diaminobutane) to yield spermidine. This chain is Polyamine aminopropyltransferase, found in Clostridium botulinum (strain Eklund 17B / Type B).